The following is a 174-amino-acid chain: Mytilin-3 (174 aa).

An N-terminal signal peptide occupies residues 1–16; that stretch reads MLKGIILIVTIQLVNA.

In terms of tissue distribution, component of the organic matrix of calcified shell layers like nacre and prisms.

Its subcellular location is the secreted. The polypeptide is Mytilin-3 (Mytilus californianus (California mussel)).